The primary structure comprises 359 residues: MDPLGPAKTQWSWRCCLTALLFQLLVAVCFFSYLRVSRDDPTVYPNGSPFPDSTGTPAHSIPLILLWTWPFNKPIALPRCSEMVPGTADCNITADRKVYPQADAVIVHHREVMYNPSAQLPRSPRRQGQRWIWFNLESPSHCWHLKAMDGYFNLTMSYRSDSDIFTPYGWLEPWSGQPAHPPLNLSAKTELVAWAVSNWRPNSARVRYYQSLQAHLKVDVYGRSHKPLPQGTMMETLSRYKFYLAFENSVHPDYITEKLWRNALEAWAVPVVLGPSRSNYERFLPPDAFIHVDDFQSPKDLAQYLQELDKDHARYLSYFRWRETLQPRSCSWALDFCKACWKLQEESRYQTRSIAAWFT.

Topologically, residues 1–14 (MDPLGPAKTQWSWR) are cytoplasmic. A helical; Signal-anchor for type II membrane protein transmembrane segment spans residues 15-34 (CCLTALLFQLLVAVCFFSYL). Residues 35–359 (RVSRDDPTVY…QTRSIAAWFT (325 aa)) are Lumenal-facing. A determines site-specific fucosylation region spans residues 73–112 (KPIALPRCSEMVPGTADCNITADRKVYPQADAVIVHHREV). Asn91, Asn153, and Asn184 each carry an N-linked (GlcNAc...) asparagine glycan.

Belongs to the glycosyltransferase 10 family. As to quaternary structure, homodimer and monomer. Monomer (secreted form). In terms of processing, N-glycosylated. Proteolytic cleavage releases a secreted glycoform of 43 kDa.

Its subcellular location is the golgi apparatus. It localises to the golgi stack membrane. The protein localises to the secreted. It catalyses the reaction a beta-D-galactosyl-(1-&gt;4)-N-acetyl-beta-D-glucosaminyl derivative + GDP-beta-L-fucose = a beta-D-galactosyl-(1-&gt;4)-[alpha-L-fucosyl-(1-&gt;3)]-N-acetyl-beta-D-glucosaminyl derivative + GDP + H(+). The enzyme catalyses an N-acetyl-alpha-neuraminyl-(2-&gt;3)-beta-D-galactosyl-(1-&gt;4)-N-acetyl-beta-D-glucosaminyl derivative + GDP-beta-L-fucose = an alpha-Neu5Ac-(2-&gt;3)-beta-D-Gal-(1-&gt;4)-[alpha-L-Fuc-(1-&gt;3)]-beta-D-GlcNAc derivative + GDP + H(+). The catalysed reaction is an alpha-Neu5Ac-(2-&gt;3)-beta-D-Gal-(1-&gt;4)-beta-D-GlcNAc-(1-&gt;3)-beta-D-Gal-(1-&gt;4)-[alpha-L-Fuc-(1-&gt;3)]-beta-D-GlcNAc derivative + GDP-beta-L-fucose = an alpha-Neu5Ac-(2-&gt;3)-beta-D-Gal-(1-&gt;4)-[alpha-L-Fuc-(1-&gt;3)]-beta-D-GlcNAc-(1-&gt;3)-beta-D-Gal-(1-&gt;4)-[alpha-L-Fuc-(1-&gt;3)]-beta-D-GlcNAc derivative + GDP + H(+). It carries out the reaction a neolactoside nLc6Cer + GDP-beta-L-fucose = beta-D-Gal-(1-&gt;4)-[alpha-L-Fuc-(1-&gt;3)]-beta-D-GlcNAc-(1-&gt;3)-beta-D-Gal-(1-&gt;4)-beta-D-GlcNAc-(1-&gt;3)-beta-D-Gal-(1-&gt;4)-beta-D-Glc-(1&lt;-&gt;1')-Cer + GDP + H(+). It catalyses the reaction a neolactoside nLc6Cer + GDP-beta-L-fucose = beta-D-galactosyl-(1-&gt;4)-N-acetyl-beta-D-glucosaminyl-(1-&gt;3)-beta-D-galactosyl-(1-&gt;4)-[alpha-L-fucosyl-(1-&gt;3)]-N-acetyl-beta-D-glucosaminyl-(1-&gt;3)-beta-D-galactosyl-(1-&gt;4)-beta-D-glucosyl-(1&lt;-&gt;1')-ceramide + GDP + H(+). The enzyme catalyses a neolactoside VI(3)-alpha-NeuNAc-nLc6Cer + GDP-beta-L-fucose = a neolactoside VI(3)-alpha-NeuAc,V(3)-alphaFuc-nLc6Cer + GDP + H(+). The catalysed reaction is beta-D-galactosyl-(1-&gt;4)-N-acetyl-D-glucosamine + GDP-beta-L-fucose = beta-D-galactosyl-(1-&gt;4)-[alpha-L-fucosyl-(1-&gt;3)]-N-acetyl-D-glucosamine + GDP + H(+). It carries out the reaction N-acetyl-alpha-neuraminosyl-(2-&gt;3)-beta-D-galactosyl-(1-&gt;4)-N-acetyl-beta-D-glucosamine + GDP-beta-L-fucose = N-acetyl-alpha-neuraminosyl-(2-&gt;3)-beta-D-galactosyl-(1-&gt;4)-[alpha-L-fucosyl-(1-&gt;3)]-N-acetyl-beta-D-glucosamine + GDP + H(+). It catalyses the reaction lactose + GDP-beta-L-fucose = beta-D-galactosyl-(1-&gt;4)-[alpha-L-fucosyl-(1-&gt;3)]-D-glucose + GDP + H(+). The enzyme catalyses alpha-L-Fuc-(1-&gt;2)-beta-D-Gal-(1-&gt;4)-D-Glc + GDP-beta-L-fucose = alpha-L-Fuc-(1-&gt;2)-beta-D-Gal-(1-&gt;4)-[alpha-L-Fuc-(1-&gt;3)]-D-Glc + GDP + H(+). The catalysed reaction is a beta-D-galactosyl-(1-&gt;4)-N-acetyl-beta-D-6-sulfooxy-glucosaminyl derivative + GDP-beta-L-fucose = a beta-D-galactosyl-(1-&gt;4)-[alpha-L-fucosyl-(1-&gt;3)]-N-acetyl-beta-D-6-sulfooxy-glucosaminyl derivative + GDP + H(+). The protein operates within protein modification; protein glycosylation. Functionally, catalyzes the transfer of L-fucose, from a guanosine diphosphate-beta-L-fucose, to the N-acetyl glucosamine (GlcNAc) of a distal alpha2,3 sialylated lactosamine unit of a glycoprotein- or glycolipid-linked sialopolylactosamines chain or of a distal or internal lactosamine unit of a neutral glycoprotein- or glycolipid-linked polylactosamines chain through an alpha-1,3 glycosidic linkage and participates in surface expression of the sialyl Lewis X (sLe(x)), Lewis X (Le(x)) and non sialylated VIM2 determinants. Moreover transfers fucose to H-type 2 (Fucalpha1-2Galbeta1-4GlcNAc) chain acceptor substrates and participates in difucosylated sialyl Lewis x determinants. Also fucosylates a polylactosamine substrate having a 6 sulfate modification at the GlcNAc moiety and gives rise to sialyl and non-sialyl 6-sulfo lewis X. Does not have activity towards type 1 ((Galbeta1-3GlcNAc)) and H-type 1 chain (Fucalpha1-2Galbeta1-3GlcNAc) acceptors substrates. This is 4-galactosyl-N-acetylglucosaminide 3-alpha-L-fucosyltransferase FUT6 from Pongo pygmaeus (Bornean orangutan).